The following is a 391-amino-acid chain: Phosphoglycerate kinase (391 aa).

Substrate-binding positions include 21-23 (DLN), R36, 59-62 (HLGR), R113, and R146. ATP contacts are provided by residues K197, E319, and 345-348 (GGDT).

Belongs to the phosphoglycerate kinase family. As to quaternary structure, monomer.

The protein localises to the cytoplasm. The enzyme catalyses (2R)-3-phosphoglycerate + ATP = (2R)-3-phospho-glyceroyl phosphate + ADP. It functions in the pathway carbohydrate degradation; glycolysis; pyruvate from D-glyceraldehyde 3-phosphate: step 2/5. The chain is Phosphoglycerate kinase from Shewanella halifaxensis (strain HAW-EB4).